Reading from the N-terminus, the 268-residue chain is Non-homologous end joining protein Ku (268 aa).

A Ku domain is found at 13–175; the sequence is VSLVTCPVTM…TLHDGNAVRN (163 aa). The disordered stretch occupies residues 174–194; it reads RNGGHPAARTRPASEAESADS.

This sequence belongs to the prokaryotic Ku family. In terms of assembly, homodimer. Interacts with LigD.

Functionally, with LigD forms a non-homologous end joining (NHEJ) DNA repair enzyme, which repairs dsDNA breaks with reduced fidelity. Binds linear dsDNA with 5'- and 3'- overhangs but not closed circular dsDNA nor ssDNA. Recruits and stimulates the ligase activity of LigD. The chain is Non-homologous end joining protein Ku from Gluconacetobacter diazotrophicus (strain ATCC 49037 / DSM 5601 / CCUG 37298 / CIP 103539 / LMG 7603 / PAl5).